The primary structure comprises 369 residues: MCTQDETIFVLHDQQSNNSAAQSFTNFIFGDSLVDVGNNNYIFTLSKADSSPYGIDFAPSNGQPTGRFTNGRTISDIVGEALGAKSPPPPYLEPNTEANTIRNGINYASGAAGILDDTGLLFIGRVPLREQVSNFEKSREYMVRVIGENGTKEMLKNAMFTITIGSNDILNYIQPSIPFFSQDKLPTDVLQDSMVLHLTTHLKRLHQLGGRKFVVVGVGPLGCIPFARALNLIPAGKCSEQVNQVVRGYNMKLIHSLKTLNNELRSEDYNTTFVYANSYDLFLKLVLNYQLFGLKNADKPCCGGYFPPFACFKGPNQNSSQAACEDRSKFVFWDAYHPTEAANLIVAKALLDGDQTVATPFNIRYLNDL.

The active-site Nucleophile is S32. Active-site residues include D334 and H337.

The protein belongs to the 'GDSL' lipolytic enzyme family.

The sequence is that of GDSL esterase/lipase At5g41890 from Arabidopsis thaliana (Mouse-ear cress).